The chain runs to 390 residues: Transforming growth factor beta-1 proprotein (390 aa).

A signal peptide spans 1-29; that stretch reads MPPSGLRLLPLLLPLLRLLVLTPGRPAAG. Residues 30-74 form a straightjacket domain region; that stretch reads LSTCKTIDMELVKRKRIEAIRGQILSKLRLSSPPSQGEVPPVPLP. The segment at 75–271 is arm domain; that stretch reads EAVLALYNST…ATPLERAQHL (197 aa). N82, N136, and N176 each carry an N-linked (GlcNAc...) asparagine glycan. The interval 226–252 is bowtie tail; that stretch reads DSKDNTLQVDINGFSSSRRGDLATIHG. A Cell attachment site motif is present at residues 244–246; it reads RGD. 4 disulfide bridges follow: C285/C294, C293/C356, C322/C387, and C326/C389.

The protein belongs to the TGF-beta family. In terms of assembly, homodimer; disulfide-linked. Interacts with the serine proteases, HTRA1 and HTRA3: the interaction with either inhibits TGFB1-mediated signaling and the HTRA protease activity is required for this inhibition. May interact with THSD4; this interaction may lead to sequestration by FBN1 microfibril assembly and attenuation of TGFB signaling. Interacts with CD109, DPT and ASPN. Interacts with EFEMP2. Interacts with TSKU; the interaction contributes to regulation of the hair cycle. Interacts with TGFBR3. Homodimer; disulfide-linked. Interacts with transforming growth factor beta-1 (TGF-beta-1) chain; interaction is non-covalent and maintains TGF-beta-1 in a latent state; each latency-associated peptide (LAP) monomer interacts with TGF-beta-1 in the other monomer. Interacts with LTBP1; leading to regulation of TGF-beta-1 activation. Interacts with LRRC32/GARP; leading to regulation of TGF-beta-1 activation on the surface of activated regulatory T-cells (Tregs). Interacts with LRRC33/NRROS; leading to regulation of TGF-beta-1 activation in macrophages and microglia. Interacts (via cell attachment site) with integrins ITGAV and ITGB6 (ITGAV:ITGB6), leading to release of the active TGF-beta-1. Interacts with NREP; the interaction results in a decrease in TGFB1 autoinduction. Interacts with HSP90AB1; inhibits latent TGFB1 activation. As to quaternary structure, homodimer; disulfide-linked. Interacts with TGF-beta receptors (TGFBR1 and TGFBR2), leading to signal transduction. In terms of processing, transforming growth factor beta-1 proprotein: The precursor proprotein is cleaved in the Golgi apparatus by FURIN to form Transforming growth factor beta-1 (TGF-beta-1) and Latency-associated peptide (LAP) chains, which remain non-covalently linked, rendering TGF-beta-1 inactive. Post-translationally, N-glycosylated. Deglycosylation leads to activation of Transforming growth factor beta-1 (TGF-beta-1); mechanisms triggering deglycosylation-driven activation of TGF-beta-1 are however unclear.

The protein resides in the secreted. Its subcellular location is the extracellular space. The protein localises to the extracellular matrix. Transforming growth factor beta-1 proprotein: Precursor of the Latency-associated peptide (LAP) and Transforming growth factor beta-1 (TGF-beta-1) chains, which constitute the regulatory and active subunit of TGF-beta-1, respectively. Functionally, required to maintain the Transforming growth factor beta-1 (TGF-beta-1) chain in a latent state during storage in extracellular matrix. Associates non-covalently with TGF-beta-1 and regulates its activation via interaction with 'milieu molecules', such as LTBP1, LRRC32/GARP and LRRC33/NRROS, that control activation of TGF-beta-1. Interaction with LRRC33/NRROS regulates activation of TGF-beta-1 in macrophages and microglia. Interaction with LRRC32/GARP controls activation of TGF-beta-1 on the surface of activated regulatory T-cells (Tregs). Interaction with integrins (ITGAV:ITGB6 or ITGAV:ITGB8) results in distortion of the Latency-associated peptide chain and subsequent release of the active TGF-beta-1. In terms of biological role, multifunctional protein that regulates the growth and differentiation of various cell types and is involved in various processes, such as normal development, immune function, microglia function and responses to neurodegeneration. Activation into mature form follows different steps: following cleavage of the proprotein in the Golgi apparatus, Latency-associated peptide (LAP) and Transforming growth factor beta-1 (TGF-beta-1) chains remain non-covalently linked rendering TGF-beta-1 inactive during storage in extracellular matrix. At the same time, LAP chain interacts with 'milieu molecules', such as LTBP1, LRRC32/GARP and LRRC33/NRROS that control activation of TGF-beta-1 and maintain it in a latent state during storage in extracellular milieus. TGF-beta-1 is released from LAP by integrins (ITGAV:ITGB6 or ITGAV:ITGB8): integrin-binding to LAP stabilizes an alternative conformation of the LAP bowtie tail and results in distortion of the LAP chain and subsequent release of the active TGF-beta-1. Once activated following release of LAP, TGF-beta-1 acts by binding to TGF-beta receptors (TGFBR1 and TGFBR2), which transduce signal. While expressed by many cells types, TGF-beta-1 only has a very localized range of action within cell environment thanks to fine regulation of its activation by Latency-associated peptide chain (LAP) and 'milieu molecules'. Plays an important role in bone remodeling: acts as a potent stimulator of osteoblastic bone formation, causing chemotaxis, proliferation and differentiation in committed osteoblasts. Can promote either T-helper 17 cells (Th17) or regulatory T-cells (Treg) lineage differentiation in a concentration-dependent manner. At high concentrations, leads to FOXP3-mediated suppression of RORC and down-regulation of IL-17 expression, favoring Treg cell development. At low concentrations in concert with IL-6 and IL-21, leads to expression of the IL-17 and IL-23 receptors, favoring differentiation to Th17 cells. Stimulates sustained production of collagen through the activation of CREB3L1 by regulated intramembrane proteolysis (RIP). Mediates SMAD2/3 activation by inducing its phosphorylation and subsequent translocation to the nucleus. Positively regulates odontoblastic differentiation in dental papilla cells, via promotion of IPO7-mediated translocation of phosphorylated SMAD2 to the nucleus and subsequent transcription of target genes. Can induce epithelial-to-mesenchymal transition (EMT) and cell migration in various cell types. This chain is Transforming growth factor beta-1 proprotein (TGFB1), found in Canis lupus familiaris (Dog).